The primary structure comprises 501 residues: 7-alpha-hydroxycholest-4-en-3-one 12-alpha-hydroxylase (501 aa).

The helical transmembrane segment at 1–21 (MVLWGPVLGALLVVIAGYLCL) threads the bilayer. Position 326 is a phosphoserine (Ser326). Residue Cys440 participates in heme binding.

This sequence belongs to the cytochrome P450 family. It depends on heme as a cofactor. Liver.

The protein localises to the endoplasmic reticulum membrane. The protein resides in the microsome membrane. The enzyme catalyses 7alpha-hydroxycholest-4-en-3-one + reduced [NADPH--hemoprotein reductase] + O2 = 7alpha,12alpha-dihydroxycholest-4-en-3-one + oxidized [NADPH--hemoprotein reductase] + H2O + H(+). It carries out the reaction 5beta-cholestane-3alpha,7alpha-diol + reduced [NADPH--hemoprotein reductase] + O2 = 5beta-cholestane-3alpha,7alpha,12alpha-triol + oxidized [NADPH--hemoprotein reductase] + H2O + H(+). The catalysed reaction is chenodeoxycholate + reduced [NADPH--hemoprotein reductase] + O2 = cholate + oxidized [NADPH--hemoprotein reductase] + H2O + H(+). It functions in the pathway lipid metabolism; bile acid biosynthesis. Functionally, a cytochrome P450 monooxygenase involved in primary bile acid biosynthesis. Catalyzes the 12alpha-hydroxylation of 7alpha-hydroxy-4-cholesten-3-one, an intermediate metabolite in cholic acid biosynthesis. Controls biliary balance of cholic acid and chenodeoxycholic acid, ultimately regulating the intestinal absorption of dietary lipids. Mechanistically, uses molecular oxygen inserting one oxygen atom into a substrate, and reducing the second into a water molecule, with two electrons provided by NADPH via cytochrome P450 reductase (CPR; NADPH--hemoprotein reductase). The polypeptide is 7-alpha-hydroxycholest-4-en-3-one 12-alpha-hydroxylase (Homo sapiens (Human)).